The chain runs to 352 residues: Pyruvate dehydrogenase E1 component subunit beta, mitochondrial (352 aa).

The N-terminal 21 residues, 1–21 (MALRKCGNLFVARLAGTSTRA), are a transit peptide targeting the mitochondrion. Glutamate 81 serves as a coordination point for thiamine diphosphate. K(+) contacts are provided by isoleucine 134, alanine 182, isoleucine 183, aspartate 185, and asparagine 187.

Tetramer of 2 alpha and 2 beta subunits. Thiamine diphosphate is required as a cofactor.

The protein localises to the mitochondrion matrix. The enzyme catalyses N(6)-[(R)-lipoyl]-L-lysyl-[protein] + pyruvate + H(+) = N(6)-[(R)-S(8)-acetyldihydrolipoyl]-L-lysyl-[protein] + CO2. Its function is as follows. The pyruvate dehydrogenase complex catalyzes the overall conversion of pyruvate to acetyl-CoA and CO(2). It contains multiple copies of three enzymatic components: pyruvate dehydrogenase (E1), dihydrolipoamide acetyltransferase (E2) and lipoamide dehydrogenase (E3). This is Pyruvate dehydrogenase E1 component subunit beta, mitochondrial (pdhb-1) from Caenorhabditis elegans.